We begin with the raw amino-acid sequence, 457 residues long: Transmembrane protease serine 5 (457 aa).

Residues 1–21 (MSLMLDDQPPMEAQYAEEGPG) form a disordered region. Residues 1 to 49 (MSLMLDDQPPMEAQYAEEGPGPGIFRAEPGDQQHPISQAVCWRSMRRGC) are Cytoplasmic-facing. Residues 50–70 (AVLGALGLLAGAGVGSWLLVL) traverse the membrane as a helical; Signal-anchor for type II membrane protein segment. Over 71-457 (YLCPAASQPI…IHDTAQDSLL (387 aa)) the chain is Extracellular. The 96-residue stretch at 112–207 (FRINSEDFLL…SGQVVSLRCS (96 aa)) folds into the SRCR domain. 7 disulfides stabilise this stretch: Cys135-Cys196, Cys148-Cys206, Cys209-Cys328, Cys243-Cys259, Cys342-Cys411, Cys374-Cys390, and Cys401-Cys429. Residues Asn163, Asn170, and Asn195 are each glycosylated (N-linked (GlcNAc...) asparagine). The region spanning 218-453 (IVGGQSVAPG…FLDWIHDTAQ (236 aa)) is the Peptidase S1 domain. Active-site charge relay system residues include His258 and Asp308. Residues Asn319 and Asn375 are each glycosylated (N-linked (GlcNAc...) asparagine). Catalysis depends on Ser405, which acts as the Charge relay system.

This sequence belongs to the peptidase S1 family. Brain-specific. Predominantly expressed in neurons, in their axons, and at the synapses of motoneurons in the spinal cord.

It localises to the cell membrane. Its function is as follows. May play a role in hearing. The chain is Transmembrane protease serine 5 (TMPRSS5) from Homo sapiens (Human).